Reading from the N-terminus, the 1709-residue chain is MGFLPKLLLLASFFPAGQASWGVSSPQDVQGVKGSCLLIPCIFSFPADVEVPDGITAIWYYDYSGQRQVVSHSADPKLVEARFRGRTEFMGNPEHRVCNLLLKDLQPEDSGSYNFRFEISEVNRWSDVKGTLVTVTEEPRVPTIASPVELLEGTEVDFNCSTPYVCLQEQVRLQWQGQDPARSVTFNSQKFEPTGVGHLETLHMAMSWQDHGRILRCQLSVANHRAQSEIHLQVKYAPKGVKILLSPSGRNILPGELVTLTCQVNSSYPAVSSIKWLKDGVRLQTKTGVLHLPQAAWSDAGVYTCQAENGVGSLVSPPISLHIFMAEVQVSPAGPILENQTVTLVCNTPNEAPSDLRYSWYKNHVLLEDAHSHTLRLHLATRADTGFYFCEVQNVHGSERSGPVSVVVNHPPLTPVLTAFLETQAGLVGILHCSVVSEPLATLVLSHGGHILASTSGDSDHSPRFSGTSGPNSLRLEIRDLEETDSGEYKCSATNSLGNATSTLDFHANAARLLISPAAEVVEGQAVTLSCRSGLSPTPDARFSWYLNGALLHEGPGSSLLLPAASSTDAGSYHCRARDGHSASGPSSPAVLTVLYPPRQPTFTTRLDLDAAGAGAGRRGLLLCRVDSDPPARLQLLHKDRVVATSLPSGGGCSTCGGCSPRMKVTKAPNLLRVEIHNPLLEEEGLYLCEASNALGNASTSATFNGQATVLAIAPSHTLQEGTEANLTCNVSREAAGSPANFSWFRNGVLWAQGPLETVTLLPVARTDAALYACRILTEAGAQLSTPVLLSVLYPPDRPKLSALLDMGQGHMALFICTVDSRPLALLALFHGEHLLATSLGPQVPSHGRFQAKAEANSLKLEVRELGLGDSGSYRCEATNVLGSSNTSLFFQVRGAWVQVSPSPELQEGQAVVLSCQVHTGVPEGTSYRWYRDGQPLQESTSATLRFAAITLTQAGAYHCQAQAPGSATTSLAAPISLHVSYAPRHVTLTTLMDTGPGRLGLLLCRVDSDPPAQLRLLHGDRLVASTLQGVGGPEGSSPRLHVAVAPNTLRLEIHGAMLEDEGVYICEASNTLGQASASADFDAQAVNVQVWPGATVREGQLVNLTCLVWTTHPAQLTYTWYQDGQQRLDAHSIPLPNVTVRDATSYRCGVGPPGRAPRLSRPITLDVLYAPRNLRLTYLLESHGGQLALVLCTVDSRPPAQLALSHAGRLLASSTAASVPNTLRLELRGPQPRDEGFYSCSARSPLGQANTSLELRLEGVRVILAPEAAVPEGAPITVTCADPAAHAPTLYTWYHNGRWLQEGPAASLSFLVATRAHAGAYSCQAQDAQGTRSSRPAALQVLYAPQDAVLSSFRDSRARSMAVIQCTVDSEPPAELALSHDGKVLATSSGVHSLASGTGHVQVARNALRLQVQDVPAGDDTYVCTAQNLLGSISTIGRLQVEGARVVAEPGLDVPEGAALNLSCRLLGGPGPVGNSTFAWFWNDRRLHAEPVPTLAFTHVARAQAGMYHCLAELPTGAAASAPVMLRVLYPPKTPTMMVFVEPEGGLRGILDCRVDSEPLASLTLHLGSRLVASSQPQGAPAEPHIHVLASPNALRVDIEALRPSDQGEYICSASNVLGSASTSTYFGVRALHRLHQFQQLLWVLGLLVGLLLLLLGLGACYTWRRRRVCKQSMGENSVEMAFQKETTQLIDPDAATCETSTCAPPLG.

Positions 1-19 are cleaved as a signal peptide; that stretch reads MGFLPKLLLLASFFPAGQA. An Ig-like V-type domain is found at 20–136; sequence SWGVSSPQDV…DVKGTLVTVT (117 aa). Over 20–1641 the chain is Extracellular; sequence SWGVSSPQDV…ALHRLHQFQQ (1622 aa). Disulfide bonds link cysteine 36–cysteine 166, cysteine 41–cysteine 98, cysteine 160–cysteine 217, and cysteine 262–cysteine 305. N-acetylneuraminate is bound by residues tyrosine 63, arginine 116, and 122–126; that span reads VNRWS. Ig-like C2-type domains are found at residues 139–233, 238–320, 326–405, 411–507, 511–593, 601–705, 708–785, 799–894, 898–977, 984–1083, 1085–1165, and 1176–1248; these read PRVP…IHLQ, PKGV…PPIS, AEVQ…GPVS, PPLT…LDFH, ARLL…AVLT, PTFT…ATFN, ATVL…AQLS, PKLS…FQVR, VQVS…APIS, PRHV…ADFD, QAVN…RPIT, and RLTY…SPLG. Asparagine 159 is a glycosylation site (N-linked (GlcNAc...) asparagine). N-linked (GlcNAc...) asparagine glycosylation is found at asparagine 265 and asparagine 339. Cystine bridges form between cysteine 346-cysteine 390 and cysteine 433-cysteine 491. N-linked (GlcNAc...) asparagine glycosylation is present at asparagine 499. 2 disulfides stabilise this stretch: cysteine 531–cysteine 575 and cysteine 624–cysteine 689. N-linked (GlcNAc...) asparagine glycosylation is found at asparagine 697, asparagine 726, asparagine 730, and asparagine 741. 2 disulfide bridges follow: cysteine 729/cysteine 774 and cysteine 817/cysteine 876. Asparagine 886 carries N-linked (GlcNAc...) asparagine glycosylation. 2 disulfides stabilise this stretch: cysteine 916–cysteine 960 and cysteine 1005–cysteine 1067. N-linked (GlcNAc...) asparagine glycosylation is found at asparagine 1104 and asparagine 1138. 2 cysteine pairs are disulfide-bonded: cysteine 1107-cysteine 1149 and cysteine 1193-cysteine 1241. Asparagine 1251 carries N-linked (GlcNAc...) asparagine glycosylation. Ig-like C2-type domains are found at residues 1259–1341, 1350–1442, 1445–1528, and 1536–1631; these read EGVR…AALQ, VLSS…RLQV, ARVV…VMLR, and PTMM…FGVR. Intrachain disulfides connect cysteine 1281/cysteine 1324 and cysteine 1367/cysteine 1425. 2 N-linked (GlcNAc...) asparagine glycosylation sites follow: asparagine 1462 and asparagine 1476. Disulfide bonds link cysteine 1465–cysteine 1511 and cysteine 1554–cysteine 1613. A helical membrane pass occupies residues 1642 to 1662; it reads LLWVLGLLVGLLLLLLGLGAC. The Cytoplasmic segment spans residues 1663 to 1709; sequence YTWRRRRVCKQSMGENSVEMAFQKETTQLIDPDAATCETSTCAPPLG.

Belongs to the immunoglobulin superfamily. SIGLEC (sialic acid binding Ig-like lectin) family. In terms of assembly, interacts with TYROBP. Interacts with CLEC10A. In terms of tissue distribution, expressed by macrophages in various tissues. High levels are found in spleen, lymph node, perivascular macrophages in brain and lower levels in bone marrow, liver Kupffer cells and lamina propria of colon and lung. Also expressed by inflammatory macrophages in rheumatoid arthritis.

The protein resides in the cell membrane. It is found in the secreted. Macrophage-restricted adhesion molecule that mediates sialic-acid dependent binding to lymphocytes, including granulocytes, monocytes, natural killer cells, B-cells and CD8 T-cells. Plays a crucial role in limiting bacterial dissemination by engaging sialylated bacteria to promote effective phagocytosis and antigen presentation for the adaptive immune response. Mediates the uptake of various enveloped viruses via sialic acid recognition and subsequently induces the formation of intracellular compartments filled with virions (VCCs). In turn, enhances macrophage-to-T-cell transmission of several viruses including HIV-1 or SARS-CoV-2. Acts as an endocytic receptor mediating clathrin dependent endocytosis. Preferentially binds to alpha-2,3-linked sialic acid. Binds to SPN/CD43 on T-cells. May play a role in hemopoiesis. Plays a role in the inhibition of antiviral innate immune by promoting TBK1 degradation via TYROBP and TRIM27-mediated ubiquitination. Its function is as follows. (Microbial infection) Facilitates viral cytoplasmic entry into activated dendritic cells via recognition of sialylated gangliosides pesent on viral membrane. This Homo sapiens (Human) protein is Sialoadhesin (SIGLEC1).